The sequence spans 328 residues: Malate dehydrogenase (328 aa).

Residue 11 to 17 coordinates NAD(+); that stretch reads GAAGQIG. Substrate is bound by residues R94 and R100. Residues N107, Q114, and 131 to 133 contribute to the NAD(+) site; that span reads VGN. Residues N133 and R164 each contribute to the substrate site. H189 functions as the Proton acceptor in the catalytic mechanism.

Belongs to the LDH/MDH superfamily. MDH type 2 family.

It carries out the reaction (S)-malate + NAD(+) = oxaloacetate + NADH + H(+). Catalyzes the reversible oxidation of malate to oxaloacetate. In Xanthomonas oryzae pv. oryzae (strain MAFF 311018), this protein is Malate dehydrogenase.